The following is a 199-amino-acid chain: Elongation factor Ts (199 aa).

Residues 82-85 are involved in Mg(2+) ion dislocation from EF-Tu; the sequence is TDFV.

The protein belongs to the EF-Ts family.

The protein localises to the cytoplasm. In terms of biological role, associates with the EF-Tu.GDP complex and induces the exchange of GDP to GTP. It remains bound to the aminoacyl-tRNA.EF-Tu.GTP complex up to the GTP hydrolysis stage on the ribosome. The chain is Elongation factor Ts from Leptospira interrogans serogroup Icterohaemorrhagiae serovar copenhageni (strain Fiocruz L1-130).